Consider the following 136-residue polypeptide: Large ribosomal subunit protein uL16 (136 aa).

This sequence belongs to the universal ribosomal protein uL16 family. Part of the 50S ribosomal subunit.

Functionally, binds 23S rRNA and is also seen to make contacts with the A and possibly P site tRNAs. This is Large ribosomal subunit protein uL16 from Shewanella piezotolerans (strain WP3 / JCM 13877).